The following is a 356-amino-acid chain: Anthranilate phosphoribosyltransferase (356 aa).

Residues glycine 96, glycine 99 to aspartate 100, threonine 104, asparagine 106 to threonine 109, lysine 124 to glycine 132, and serine 136 each bind 5-phospho-alpha-D-ribose 1-diphosphate. Glycine 96 contributes to the anthranilate binding site. Serine 108 is a Mg(2+) binding site. Asparagine 127 is a binding site for anthranilate. An anthranilate-binding site is contributed by arginine 182. Residues aspartate 241 and glutamate 242 each contribute to the Mg(2+) site.

Belongs to the anthranilate phosphoribosyltransferase family. In terms of assembly, homodimer. Requires Mg(2+) as cofactor.

The catalysed reaction is N-(5-phospho-beta-D-ribosyl)anthranilate + diphosphate = 5-phospho-alpha-D-ribose 1-diphosphate + anthranilate. It participates in amino-acid biosynthesis; L-tryptophan biosynthesis; L-tryptophan from chorismate: step 2/5. In terms of biological role, catalyzes the transfer of the phosphoribosyl group of 5-phosphorylribose-1-pyrophosphate (PRPP) to anthranilate to yield N-(5'-phosphoribosyl)-anthranilate (PRA). This Trichodesmium erythraeum (strain IMS101) protein is Anthranilate phosphoribosyltransferase.